The following is a 315-amino-acid chain: beta-hydroxyaspartate dehydratase (315 aa).

Position 53 is an N6-(pyridoxal phosphate)lysine (lysine 53). Pyridoxal 5'-phosphate contacts are provided by residues asparagine 80, 179 to 183, and threonine 303; that span reads GGGGM.

Pyridoxal 5'-phosphate serves as cofactor.

It catalyses the reaction (3S)-3-hydroxy-D-aspartate = iminosuccinate + H2O. Functionally, catalyzes the dehydration of (2R,3S)-beta-hydroxyaspartate ((3S)-3-hydroxy-D-aspartate) into iminosuccinate. Is essential for the growth of P.denitrificans in the presence of glycolate and glyoxylate since it functions in glyoxylate assimilation via the beta-hydroxyaspartate cycle (BHAC). The sequence is that of beta-hydroxyaspartate dehydratase from Paracoccus denitrificans (strain Pd 1222).